The following is a 312-amino-acid chain: Ribosomal protein L11 methyltransferase (312 aa).

4 residues coordinate S-adenosyl-L-methionine: Thr162, Gly183, Asp205, and Asn248.

This sequence belongs to the methyltransferase superfamily. PrmA family.

The protein localises to the cytoplasm. It carries out the reaction L-lysyl-[protein] + 3 S-adenosyl-L-methionine = N(6),N(6),N(6)-trimethyl-L-lysyl-[protein] + 3 S-adenosyl-L-homocysteine + 3 H(+). Its function is as follows. Methylates ribosomal protein L11. In Bacillus cereus (strain Q1), this protein is Ribosomal protein L11 methyltransferase.